Here is a 186-residue protein sequence, read N- to C-terminus: ATP-dependent protease subunit HslV (186 aa).

Thr14 is a catalytic residue. Ala168, Cys171, and Thr174 together coordinate Na(+).

Belongs to the peptidase T1B family. HslV subfamily. In terms of assembly, a double ring-shaped homohexamer of HslV is capped on each side by a ring-shaped HslU homohexamer. The assembly of the HslU/HslV complex is dependent on binding of ATP.

It is found in the cytoplasm. It catalyses the reaction ATP-dependent cleavage of peptide bonds with broad specificity.. Allosterically activated by HslU binding. Protease subunit of a proteasome-like degradation complex believed to be a general protein degrading machinery. The sequence is that of ATP-dependent protease subunit HslV from Bradyrhizobium sp. (strain ORS 278).